We begin with the raw amino-acid sequence, 1747 residues long: MGGKTKQAPRTKNNAKPSSSSRTAELLGSSTPIFVGFSAQTDGGGLVPFAPGFASAEQMPDSFDAAISPQTQIILRKLSKKDPMTKKKALQELHELIEQSDVEVLKNILPLWPKYYLNLASDPEHTVREQTQTVLQLLMAKCKKAMAPYLKLLVPVWLGSRFDTYAPAASIASQSFRDTFAGNANRSREVCMHCQVEILEYATRNLTFHTAATLSIGKSLTPEDAEQKYQRVIISSLKLLSFFMGQTAQTEELSQVKEGFGTLVAHQKFWSFAKHKVPAIKAAWFECIYHILQSVALLDVITPQKTQLTNLCFQFIDDADPVVAPHIWGCVLLLQSNYVDWFVPLNIRKTLLPKLSSLLQNGFNRNAQAICPNLLPFLSKVTQASLQDLDIYDFYQRFFDDMKLAVTKKFDPPLSKSDCIVIHNAYFECLRFLMQQINNNKQREQKEEEFSFSLLDNNVLEPIAWLLKSDSTHVKIFFQHSSALVAFWDRQINNRLDNGDLYAKLLNKFWIRIFELVTQDLSAEEVNEQLLGHVLLLVQDLHMANPSLESPSVKFVEGPNEKIEKSEPTTPVKKAQEAAAFIQKELKQLVIKLVRICLDKANKGSGSGTSSSRYIEQIRTLTKMFNDAAFYKSLTDDGDLASALNKFVSLLGQLSCQACESVVEIVFEILPLLETGKRFEYIENTLMKLPQHGVQNLLLHRLLSYPLCAEAAVRQMLSGPETCEMIARIAEEVVVDNDREKLNLLHKCFFQTDTGDILINAKTVDKILLSMCGPLEQPVVDDAVEVCGSFIAQIMPVICSNNNSSLHVRQHIFLKLFKFSLEHRPEDYLSEDTLWEITTCWQDGLSSKDIEIDDDMLKCCAGIVEELANSAELKADTLDGMAEAMAKFVICSTENIEDEYKRLERIDETLTALLETPLKTTDKVQQFENHCVLLEALHGSVTAGVPFENACLSRNEILPLLQRSTLNFSTIYKLVYQFPPPQDTNDPEDELTEDYCDPNADVLKKWNEPLIAELLQCIRVAGTAECWLEMSVLQSSTEELVLILSEKVQSFMGNSSDLVAIVKERLQQAAVQQSSVIDCRLLSYLRFCPQYAAFEESASILLHEDLSENLVTQGALKTYVIALQFLLPKLSQKAITLSSAIMGTEPPEIWVKAAVFHALLLNNFEGDVNEQTDRNIIVSAVQFMTSIGERQASQKDLLHYNVEIQRQPYESVINTVEFIKLLTEVLKRFPYELSIKNWDAIRIGLSSWVLSVSKSIAQYQDPKTSLFIVAVYELFAALIDFIRSEKQKSSTELLKNMIDEWDSLFAKEVNLVLFKSYYLLTHEVSVDPGFQACYEALLEQITPVIERLDYSFVYSFCKSNSNITLDHLCNFLFKQLYSVQHSVRLSAVHSLRQLTPHFVADDIELNEKQSESLDASTTICKWHFLNRFEDYLTRYDALITKYLEEFTFKLSELDDLEPIDRHNALSYLFLWDCIINACAKSPVALRAVYTNWLNDNKYEENFLHFLFRAMPVDILKNHGAKVHSNGVYKELTWSQQKDRHLPLERYACHLYTEVLRKLPAVVRRWWNATQSRQKNFIDNLTTNYVSSLICSEELKAIANRKEKHENMQVTVHSSTREVLAVYAIDEARMELVITLAPNYPLGAVKVECGKQIGGRASSRNVGMQLTIFLTHQNGTIYDGLTMWKNNLDKKFEGVEECYVCYTVIHQETCQLPKLTCKTCKKKFHGPCLYKWFTTSSKSTCPICRNVF.

Residues 1 to 24 are disordered; that stretch reads MGGKTKQAPRTKNNAKPSSSSRTA. A compositionally biased stretch (polar residues) spans 8-24; sequence APRTKNNAKPSSSSRTA. HEAT repeat units lie at residues 65 to 102, 106 to 144, 346 to 383, 424 to 461, and 508 to 547; these read AAIS…QSDV, KNIL…KCKK, NIRK…KVTQ, NAYF…NVLE, and KFWI…ANPS. Ser566 bears the Phosphoserine mark. HEAT repeat units lie at residues 612-653, 664-711, 789-825, 952-989, 1005-1042, 1053-1090, 1129-1166, 1216-1258, 1269-1307, 1330-1363, 1364-1400, and 1500-1539; these read SRYI…LLGQ, EIVF…CAEA, SFIA…EHRP, LSRN…DPED, KWNE…ELVL, GNSS…FCPQ, KLSQ…NFEG, VEFI…SIAQ, VAVY…LFAK, FQAC…NSNI, TLDH…HFVA, and ENFL…QKDR. The segment at 1697–1744 adopts an RING-type zinc-finger fold; the sequence is CYVCYTVIHQETCQLPKLTCKTCKKKFHGPCLYKWFTTSSKSTCPICR.

Belongs to the LTN1 family. Component of the ribosome quality control complex (RQC), composed of at least the E3 ubiquitin ligase l(3)76BDr/LTN1 and Clbn/NEMF. The complex probably also contains TCF25 as well as TER94/VCP and its ubiquitin-binding cofactors. RQC forms a stable complex with 60S ribosomal subunits.

The protein resides in the cytoplasm. Its subcellular location is the cytosol. The catalysed reaction is S-ubiquitinyl-[E2 ubiquitin-conjugating enzyme]-L-cysteine + [acceptor protein]-L-lysine = [E2 ubiquitin-conjugating enzyme]-L-cysteine + N(6)-ubiquitinyl-[acceptor protein]-L-lysine.. Its pathway is protein modification; protein ubiquitination. In terms of biological role, E3 ubiquitin-protein ligase component of the ribosome quality control complex (RQC), a ribosome-associated complex that mediates ubiquitination and extraction of incompletely synthesized nascent chains for proteasomal degradation. Ubiquitination leads to TER94/VCP recruitment for extraction and degradation of the incomplete translation product. The sequence is that of E3 ubiquitin-protein ligase listerin from Drosophila melanogaster (Fruit fly).